The sequence spans 255 residues: 1-(5-phosphoribosyl)-5-[(5-phosphoribosylamino)methylideneamino] imidazole-4-carboxamide isomerase (255 aa).

Aspartate 8 functions as the Proton acceptor in the catalytic mechanism. Aspartate 129 acts as the Proton donor in catalysis.

It belongs to the HisA/HisF family.

It is found in the cytoplasm. The catalysed reaction is 1-(5-phospho-beta-D-ribosyl)-5-[(5-phospho-beta-D-ribosylamino)methylideneamino]imidazole-4-carboxamide = 5-[(5-phospho-1-deoxy-D-ribulos-1-ylimino)methylamino]-1-(5-phospho-beta-D-ribosyl)imidazole-4-carboxamide. Its pathway is amino-acid biosynthesis; L-histidine biosynthesis; L-histidine from 5-phospho-alpha-D-ribose 1-diphosphate: step 4/9. This Prochlorococcus marinus subsp. pastoris (strain CCMP1986 / NIES-2087 / MED4) protein is 1-(5-phosphoribosyl)-5-[(5-phosphoribosylamino)methylideneamino] imidazole-4-carboxamide isomerase.